Consider the following 139-residue polypeptide: Actin-depolymerizing factor 6 (139 aa).

The ADF-H domain occupies A5–L139.

This sequence belongs to the actin-binding proteins ADF family.

Its function is as follows. Actin-depolymerizing protein. Severs actin filaments (F-actin) and binds to actin monomers. This is Actin-depolymerizing factor 6 (ADF6) from Oryza sativa subsp. japonica (Rice).